Here is a 214-residue protein sequence, read N- to C-terminus: MKIWIKAICITSFVIQMSACSSSAQTKNDSRPAQAVQNGIQQHVEGKDIVDIPEAYKRKLKGLETVKGKVLHIKDGDTIDVNVKGQKQTVRLLLLDTPESVSQKIPPQKMGKEASFFLKKQLDGKSVTLVYDQGPKEDKYGRKLAYVFCNGIHINELMAKSGYGIIAYIFKPNTTLLPEMLEAEKEAKEAKAGVWSIKGFVDEKNRHYNRNDAA.

Residues 1–24 (MKIWIKAICITSFVIQMSACSSSA) form the signal peptide. Residues 64 to 197 (ETVKGKVLHI…KEAKAGVWSI (134 aa)) form the TNase-like domain. Residues Arg-91, Glu-99, and Arg-142 contribute to the active site.

This is an uncharacterized protein from Bacillus anthracis.